The chain runs to 254 residues: Type III pantothenate kinase (254 aa).

Residue 6–13 coordinates ATP; the sequence is DVGNSNIV. Residues tyrosine 100 and 107-110 each bind substrate; that span reads GADR. The Proton acceptor role is filled by aspartate 109. Aspartate 129 contacts K(+). Residue threonine 132 participates in ATP binding. Threonine 184 serves as a coordination point for substrate.

This sequence belongs to the type III pantothenate kinase family. Homodimer. The cofactor is NH4(+). It depends on K(+) as a cofactor.

The protein localises to the cytoplasm. It catalyses the reaction (R)-pantothenate + ATP = (R)-4'-phosphopantothenate + ADP + H(+). The protein operates within cofactor biosynthesis; coenzyme A biosynthesis; CoA from (R)-pantothenate: step 1/5. In terms of biological role, catalyzes the phosphorylation of pantothenate (Pan), the first step in CoA biosynthesis. In Geobacter sp. (strain M21), this protein is Type III pantothenate kinase.